A 728-amino-acid polypeptide reads, in one-letter code: Catalase-peroxidase 2 (728 aa).

A cross-link (tryptophyl-tyrosyl-methioninium (Trp-Tyr) (with M-240)) is located at residues 91-214 (WHAAGTYRTG…LAAVQMGLIY (124 aa)). H92 (proton acceptor) is an active-site residue. A cross-link (tryptophyl-tyrosyl-methioninium (Tyr-Met) (with W-91)) is located at residues 214-240 (YVNPEGPNGNPDPAKAAVDIRETFARM). H255 serves as a coordination point for heme b. The interval 338-362 (WKPNGDAGANSIPDPYDPSRRRGPT) is disordered.

The protein belongs to the peroxidase family. Peroxidase/catalase subfamily. In terms of assembly, homodimer or homotetramer. Heme b is required as a cofactor. Post-translationally, formation of the three residue Trp-Tyr-Met cross-link is important for the catalase, but not the peroxidase activity of the enzyme.

The enzyme catalyses H2O2 + AH2 = A + 2 H2O. The catalysed reaction is 2 H2O2 = O2 + 2 H2O. Its function is as follows. Bifunctional enzyme with both catalase and broad-spectrum peroxidase activity. This Cupriavidus pinatubonensis (strain JMP 134 / LMG 1197) (Cupriavidus necator (strain JMP 134)) protein is Catalase-peroxidase 2.